The chain runs to 321 residues: L-Ala-D/L-Glu epimerase (321 aa).

The substrate site is built by T124 and K149. K151 functions as the Proton acceptor; specific for (R)-substrate epimerization in the catalytic mechanism. Residues D176, E202, and D225 each contribute to the Mg(2+) site. The Proton acceptor; specific for (S)-substrate epimerization role is filled by K247. Substrate contacts are provided by C275, D297, and D299.

It belongs to the mandelate racemase/muconate lactonizing enzyme family. Monomer. Requires Mg(2+) as cofactor.

It carries out the reaction L-alanyl-L-glutamate = L-alanyl-D-glutamate. Its pathway is cell wall biogenesis; peptidoglycan recycling. Functionally, catalyzes the epimerization of L-Ala-D-Glu to L-Ala-L-Glu and has a role in the recycling of the murein peptide, of which L-Ala-D-Glu is a component. Is also able to catalyze the reverse reaction and the epimerization of all the L-Ala-X dipeptides, except L-Ala-L-Arg, L-Ala-L-Lys and L-Ala-L-Pro. Is also active with L-Gly-L-Glu, L-Phe-L-Glu, and L-Ser-L-Glu, but not with L-Glu-L-Glu, L-Lys-L-Glu, L-Pro-L-Glu, L-Lys-L-Ala, or D-Ala-D-Ala. The polypeptide is L-Ala-D/L-Glu epimerase (ycjG) (Escherichia coli (strain K12)).